A 108-amino-acid chain; its full sequence is Large ribosomal subunit protein bL31B (108 aa).

Positions 81–108 (KPAQPVQAPAEEGPVVKGKKKAPAKKKK) are disordered. Basic residues predominate over residues 97 to 108 (KGKKKAPAKKKK).

This sequence belongs to the bacterial ribosomal protein bL31 family. Type B subfamily. Part of the 50S ribosomal subunit.

In Chlamydia caviae (strain ATCC VR-813 / DSM 19441 / 03DC25 / GPIC) (Chlamydophila caviae), this protein is Large ribosomal subunit protein bL31B.